The sequence spans 830 residues: Interleukin-4 receptor subunit alpha (830 aa).

A signal peptide spans 1–32 (MGWLCPGLTFSVSCLILVWAAGSGVTCVSPGG). Residues 33–240 (VRVLEWPICL…NYYEEPLEQR (208 aa)) are Extracellular-facing. C41 and C51 form a disulfide bridge. N60 and N78 each carry an N-linked (GlcNAc...) asparagine glycan. C82 and C94 are joined by a disulfide. N-linked (GlcNAc...) asparagine glycans are attached at residues N120, N142, and N170. The region spanning 133 to 232 (APRNLMVHAN…WSPSVKWLNY (100 aa)) is the Fibronectin type-III domain. Position 172 is a phosphoserine (S172). N-linked (GlcNAc...) asparagine glycans are attached at residues N184 and N217. The WSXWS motif signature appears at 220 to 224 (WSEWS). Residues 241–264 (LPLGVSISCVVILIICLSCYFGII) form a helical membrane-spanning segment. Residues 265–830 (RIKKEWWDQI…SPGPACMDTS (566 aa)) lie on the Cytoplasmic side of the membrane. Residues 270-278 (WWDQIPNPA) carry the Box 1 motif motif. Over residues 378 to 387 (ENEEEEEEED) the composition is skewed to acidic residues. 2 disordered regions span residues 378 to 403 (ENEE…GSFQ) and 450 to 488 (MPWA…SLAS). The tract at residues 444-564 (ENASAPMPWA…ETWEQILRQS (121 aa)) is required for IRS1 activation and IL4-induced cell growth. Y504 is modified (phosphotyrosine). Disordered stretches follow at residues 508 to 610 (STFL…EAGY) and 623 to 696 (CPGT…DGQK). Positions 518 to 534 (GELDSDPELAEALEEVE) are enriched in acidic residues. The span at 538–551 (PAAPQPSEPPPTLQ) shows a compositional bias: pro residues. The required for IL4-induced gene expression stretch occupies residues 564-662 (SVLQRRAAPA…VPTPLFTFGL (99 aa)). Residues 570–582 (AAPAPASGPSSSG) show a composition bias toward low complexity. 2 positions are modified to phosphotyrosine: Y583 and Y610. A compositionally biased stretch (polar residues) spans 623 to 635 (CPGTSGLEPSSGE). Y638 carries the phosphotyrosine modification. Pro residues-rich tracts occupy residues 646–655 (PGCPETPVPT) and 665–676 (EPPPSPQNPPFP). The ITIM motif signature appears at 716 to 721 (IVYSAL). The disordered stretch occupies residues 811-830 (SQTPTAVAMLSPGPACMDTS).

It belongs to the type I cytokine receptor family. Type 4 subfamily. In terms of assembly, the functional IL4 receptor is formed by initial binding of IL4 to IL4R. Subsequent recruitment to the complex of the common gamma chain, in immune cells, creates a type I receptor and, in non-immune cells, of IL13RA1 forms a type II receptor. IL4R can also interact with the IL13/IL13RA1 complex to form a similar type II receptor. Interacts with PIK3C3. Interacts with the SH2-containing phosphatases, PTPN6/SHIP1, PTPN11/SHIP2 and INPP5D/SHIP. Interacts with JAK1 through a Box 1-containing region; inhibited by SOCS5. Interacts with SOCS5; inhibits IL4 signaling. Interacts with JAK3. Interacts with CLM1. Interacts with IL13RA2. In terms of processing, on IL4 binding, phosphorylated on C-terminal tyrosine residues.

The protein resides in the membrane. Functionally, receptor for both interleukin 4 and interleukin 13. Couples to the JAK1/2/3-STAT6 pathway. The IL4 response is involved in promoting Th2 differentiation. The IL4/IL13 responses are involved in regulating IgE production and, chemokine and mucus production at sites of allergic inflammation. In certain cell types, can signal through activation of insulin receptor substrates, IRS1/IRS2. The polypeptide is Interleukin-4 receptor subunit alpha (IL4R) (Sus scrofa (Pig)).